The sequence spans 231 residues: Orotidine 5'-phosphate decarboxylase (231 aa).

Substrate-binding positions include aspartate 11, lysine 33, 60–69 (DLKFHDIPNT), threonine 120, arginine 181, glutamine 190, glycine 210, and arginine 211. Catalysis depends on lysine 62, which acts as the Proton donor.

This sequence belongs to the OMP decarboxylase family. Type 1 subfamily. As to quaternary structure, homodimer.

It carries out the reaction orotidine 5'-phosphate + H(+) = UMP + CO2. It participates in pyrimidine metabolism; UMP biosynthesis via de novo pathway; UMP from orotate: step 2/2. Its function is as follows. Catalyzes the decarboxylation of orotidine 5'-monophosphate (OMP) to uridine 5'-monophosphate (UMP). This Photobacterium profundum (strain SS9) protein is Orotidine 5'-phosphate decarboxylase.